We begin with the raw amino-acid sequence, 215 residues long: S-crystallin 3 (215 aa).

Residues Pro-2–Gly-80 form the GST N-terminal domain. Residues Ser-82–Phe-215 form the GST C-terminal domain.

This sequence belongs to the GST superfamily. Lens.

Its function is as follows. S-crystallins are structural components of squids and octopi eye lens. Contains relatively little if any GST activity. In Enteroctopus dofleini (North Pacific giant octopus), this protein is S-crystallin 3.